Reading from the N-terminus, the 380-residue chain is MKKIILLGATGSIGTQTLAIIRENPEKFQIVALSFGRNMERGRAIIKEFKPKMVAVWHTRDRVILEAEFPNVKFFNGLEGLREVATYLDGDVLLNAVMGSVGLLPTLDAIEAGKAIAIANKETLVTAGHLVMRAAKEKNISLLPVDSEHSAILQALNGENTERIEKLVLTASGGSFRDKTREQLSEVTVKEALKHPNWNMGNKLTIDSATMFNKGLEVMEAHWLFGVDYDDIEVVIQRESIIHSMVQFVDGSFIAQLGTPDMRMPIQYALTYPDRLYIPYEKEFRITDFSALHFEKVDYERFPALKLAYNAGKIGGTMPTVLNAANEIAVAGFLNGQVAFYNIEALVENAMNRHTSISDPDLDTILQVDQETRAYVKTLL.

8 residues coordinate NADPH: threonine 10, glycine 11, serine 12, isoleucine 13, glycine 36, arginine 37, asparagine 38, and asparagine 120. 1-deoxy-D-xylulose 5-phosphate is bound at residue lysine 121. Glutamate 122 lines the NADPH pocket. Residue aspartate 146 coordinates Mn(2+). The 1-deoxy-D-xylulose 5-phosphate site is built by serine 147, glutamate 148, serine 172, and histidine 195. Glutamate 148 is a binding site for Mn(2+). Residue glycine 201 participates in NADPH binding. 1-deoxy-D-xylulose 5-phosphate contacts are provided by serine 208, asparagine 213, lysine 214, and glutamate 217. Glutamate 217 provides a ligand contact to Mn(2+).

This sequence belongs to the DXR family. Requires Mg(2+) as cofactor. Mn(2+) serves as cofactor.

It carries out the reaction 2-C-methyl-D-erythritol 4-phosphate + NADP(+) = 1-deoxy-D-xylulose 5-phosphate + NADPH + H(+). It functions in the pathway isoprenoid biosynthesis; isopentenyl diphosphate biosynthesis via DXP pathway; isopentenyl diphosphate from 1-deoxy-D-xylulose 5-phosphate: step 1/6. In terms of biological role, catalyzes the NADPH-dependent rearrangement and reduction of 1-deoxy-D-xylulose-5-phosphate (DXP) to 2-C-methyl-D-erythritol 4-phosphate (MEP). This is 1-deoxy-D-xylulose 5-phosphate reductoisomerase from Listeria monocytogenes serotype 4b (strain F2365).